We begin with the raw amino-acid sequence, 321 residues long: uncharacterized protein (321 aa).

Residues 1-56 (MANIKDIAEKAGVSVTTVSRVINNHPYVSEDKRKRVFEAMESLEYTRNIHAVHLSK) enclose the HTH lacI-type domain. A DNA-binding region (H-T-H motif) is located at residues 4–23 (IKDIAEKAGVSVTTVSRVIN).

This is an uncharacterized protein from Bacillus subtilis (strain 168).